The primary structure comprises 820 residues: Inhibitor of nuclear factor kappa-B kinase epsilon subunit homolog 1 (820 aa).

The 279-residue stretch at 21 to 299 folds into the Protein kinase domain; the sequence is LFNDESIGKG…TDIFEFQPVT (279 aa). ATP is bound by residues 27-35 and K49; that span reads IGKGAYSEV. D149 (proton acceptor) is an active-site residue. Positions 758–798 are disordered; it reads SPNKEQFPKPEQDSILESSIDEGSTSFESTPPSSPPDVGSN.

Belongs to the protein kinase superfamily. Ser/Thr protein kinase family. In terms of assembly, interacts with allo-1 (via N-terminus); the interaction is direct. As to expression, expressed in oocytes.

Its subcellular location is the cytoplasm. The enzyme catalyses L-seryl-[protein] + ATP = O-phospho-L-seryl-[protein] + ADP + H(+). It catalyses the reaction L-threonyl-[protein] + ATP = O-phospho-L-threonyl-[protein] + ADP + H(+). Functionally, serine/threonine-protein kinase, which plays a role in regulating allophagy, an autophagic process in which paternal organelles, including mitochondria and membranous organelles, are degraded in embryos. Phosphorylates the allophagy receptor allo-1, which is required for allophagy. This Caenorhabditis elegans protein is Inhibitor of nuclear factor kappa-B kinase epsilon subunit homolog 1.